A 337-amino-acid polypeptide reads, in one-letter code: MKSIGINGYGTIGKRVADAVSAQDDMKIVGVTKRTPDYEAKAAVEKGYDLYISVPERESQFEEAGIEVAGTADELFEKLDLVVDCTPGGIGAQNKTDIYEKIGLKAIFEGGEDHDAIGSSFNAEANYADNIGEDYVRVVSCNTTGLCRTLKPIYDISGIKKVRAVMVRRGADPSDVKKGPINSIVPTTEVPSHHGPDVQTIIDDINVMTMALLVPTTLMHTHNIMVELEDKITTDDVLDAFENAHRVLPVQKSLKLGSTAEIMEYAKDLGRSRGDMYEIPVWKESVNIENGELFYMQAVHQESDVVPENVDAIRAMLELEEDGEKSILKTNKAMGIL.

NAD(+)-binding positions include 11–12 (TI) and G111. 140–142 (SCN) contacts D-glyceraldehyde 3-phosphate. C141 serves as the catalytic Nucleophile. Residue R169 coordinates NAD(+). Residues 177–196 (KKGPINSIVPTTEVPSHHGP) are disordered. Residue 194–195 (HG) participates in D-glyceraldehyde 3-phosphate binding. Q301 serves as a coordination point for NAD(+).

The protein belongs to the glyceraldehyde-3-phosphate dehydrogenase family. Homotetramer.

It is found in the cytoplasm. It catalyses the reaction D-glyceraldehyde 3-phosphate + phosphate + NADP(+) = (2R)-3-phospho-glyceroyl phosphate + NADPH + H(+). The catalysed reaction is D-glyceraldehyde 3-phosphate + phosphate + NAD(+) = (2R)-3-phospho-glyceroyl phosphate + NADH + H(+). Its pathway is carbohydrate degradation; glycolysis; pyruvate from D-glyceraldehyde 3-phosphate: step 1/5. The sequence is that of Glyceraldehyde-3-phosphate dehydrogenase from Methanosphaera stadtmanae (strain ATCC 43021 / DSM 3091 / JCM 11832 / MCB-3).